Consider the following 929-residue polypeptide: Dual serine/threonine and tyrosine protein kinase (929 aa).

A compositionally biased stretch (low complexity) spans 1-14 (MEGDGVPWGSEPVS). Residues 1-21 (MEGDGVPWGSEPVSGPGPGGG) are disordered. Coiled-coil stretches lie at residues 189–215 (EEDL…MHHA) and 395–431 (RKKE…KEEL). Residues 652-906 (PKLGQELGRG…PLLGIVQPML (255 aa)) form the Protein kinase domain. ATP is bound by residues 658–666 (LGRGQYGVV) and Lys-681. Asp-777 functions as the Proton acceptor in the catalytic mechanism.

Belongs to the protein kinase superfamily. Ser/Thr protein kinase family. Predominantly expressed in skeletal muscle and testis. Expressed in basolateral and apical membranes of all tubular epithelia. Expressed in thin ascending limb of the loop of Henle and the distal convoluted tubule. Expressed in all layers of transitional ureteric epithelium and in the ureteric smooth-muscle cells. Weakly expressed in heart, brain, placenta, kidney, pancreas, spleen, thymus, prostate, uterus, small intestine, white blood cells, stomach, spinal cord and adrenal gland. Is widely distributed in the CNS. Also detected in several tumor cell lines. Expressed in the skin.

The protein resides in the cytoplasm. The protein localises to the cell membrane. Its subcellular location is the apical cell membrane. It is found in the basolateral cell membrane. It localises to the cell junction. It catalyses the reaction L-seryl-[protein] + ATP = O-phospho-L-seryl-[protein] + ADP + H(+). It carries out the reaction L-threonyl-[protein] + ATP = O-phospho-L-threonyl-[protein] + ADP + H(+). The catalysed reaction is L-tyrosyl-[protein] + ATP = O-phospho-L-tyrosyl-[protein] + ADP + H(+). Functionally, acts as a positive regulator of ERK phosphorylation downstream of fibroblast growth factor-receptor activation. Involved in the regulation of both caspase-dependent apoptosis and caspase-independent cell death. In the skin, it plays a predominant role in suppressing caspase-dependent apoptosis in response to UV stress in a range of dermal cell types. The polypeptide is Dual serine/threonine and tyrosine protein kinase (DSTYK) (Homo sapiens (Human)).